The following is a 197-amino-acid chain: Recombination protein RecR (197 aa).

The segment at 56 to 71 (CQQCRTLTEQALCNIC) adopts a C4-type zinc-finger fold. A Toprim domain is found at 79–174 (KELCIVETPA…KVSRIAHGIP (96 aa)).

The protein belongs to the RecR family.

In terms of biological role, may play a role in DNA repair. It seems to be involved in an RecBC-independent recombinational process of DNA repair. It may act with RecF and RecO. This chain is Recombination protein RecR, found in Saccharophagus degradans (strain 2-40 / ATCC 43961 / DSM 17024).